The chain runs to 299 residues: Oxygen-dependent coproporphyrinogen-III oxidase (299 aa).

Serine 92 contacts substrate. Residues histidine 96 and histidine 106 each contribute to the a divalent metal cation site. Histidine 106 functions as the Proton donor in the catalytic mechanism. A substrate-binding site is contributed by asparagine 108–arginine 110. The a divalent metal cation site is built by histidine 145 and histidine 175. An important for dimerization region spans residues tyrosine 239 to glutamate 274. Residue glycine 257–arginine 259 participates in substrate binding.

This sequence belongs to the aerobic coproporphyrinogen-III oxidase family. Homodimer. Requires a divalent metal cation as cofactor.

It localises to the cytoplasm. It catalyses the reaction coproporphyrinogen III + O2 + 2 H(+) = protoporphyrinogen IX + 2 CO2 + 2 H2O. Its pathway is porphyrin-containing compound metabolism; protoporphyrin-IX biosynthesis; protoporphyrinogen-IX from coproporphyrinogen-III (O2 route): step 1/1. In terms of biological role, involved in the heme biosynthesis. Catalyzes the aerobic oxidative decarboxylation of propionate groups of rings A and B of coproporphyrinogen-III to yield the vinyl groups in protoporphyrinogen-IX. The chain is Oxygen-dependent coproporphyrinogen-III oxidase from Xanthomonas campestris pv. campestris (strain 8004).